We begin with the raw amino-acid sequence, 77 residues long: MENFDKVKDIIVDRLGVDAEKVTEDASFKDDLGADSLDIAELVMELEDEFGTEIPDEEAEKINTVGDAVKFINSIEK.

In terms of domain architecture, Carrier spans 1 to 76; the sequence is MENFDKVKDI…DAVKFINSIE (76 aa). Serine 36 bears the O-(pantetheine 4'-phosphoryl)serine mark.

It belongs to the acyl carrier protein (ACP) family. 4'-phosphopantetheine is transferred from CoA to a specific serine of apo-ACP by AcpS. This modification is essential for activity because fatty acids are bound in thioester linkage to the sulfhydryl of the prosthetic group.

It localises to the cytoplasm. Its pathway is lipid metabolism; fatty acid biosynthesis. Functionally, carrier of the growing fatty acid chain in fatty acid biosynthesis. This is Acyl carrier protein from Staphylococcus saprophyticus subsp. saprophyticus (strain ATCC 15305 / DSM 20229 / NCIMB 8711 / NCTC 7292 / S-41).